Here is a 468-residue protein sequence, read N- to C-terminus: Cytochrome bd ubiquinol oxidase subunit 1 (468 aa).

The next 9 helical transmembrane spans lie at 15 to 35 (TLFHFLFVPMSIGLVFMVALM), 51 to 71 (AKFWGHLFLINFAVGVVTGIL), 95 to 115 (LAIEALLAFFMESIFIGLWIF), 124 to 144 (IHALCIWLVSFGTIMSSFWIL), 177 to 197 (LWVEFPHVIFGALATGAFFIA), 219 to 239 (LAMIVGLCAGLGVGLSGHMQA), 331 to 351 (FRIMVGAGVVMILAALGGLWL), 366 to 386 (IMIALISFPFLANSAGWIMTE), and 416 to 436 (SIIAFGVMYMILGALLVFLFI). Histidine 18 provides a ligand contact to heme b. Position 183 (histidine 183) interacts with heme b. Methionine 334 contacts heme b. Residues 448 to 468 (HHDVPVSTDPFSQEVYHGISS) are disordered.

It belongs to the cytochrome ubiquinol oxidase subunit 1 family. In terms of assembly, heterodimer of subunits I and II. Heme b serves as cofactor. Requires heme d cis-diol as cofactor.

The protein resides in the cell membrane. It catalyses the reaction 2 a ubiquinol + O2(in) + 4 H(+)(in) = 2 a ubiquinone + 2 H2O(in) + 4 H(+)(out). This Bacillus subtilis (strain 168) protein is Cytochrome bd ubiquinol oxidase subunit 1 (cydA).